The primary structure comprises 508 residues: Protein phosphatase PP2A regulatory subunit B (508 aa).

6 WD repeats span residues threonine 19–serine 58, glutamate 81–valine 122, alanine 166–asparagine 204, glutamate 215–serine 255, glutamate 274–lysine 312, and glutamate 329–aspartate 370. The tract at residues aspartate 369–glycine 466 is disordered. Residues aspartate 396–valine 418 show a composition bias toward acidic residues. A compositionally biased stretch (basic residues) spans phenylalanine 447 to methionine 461. A WD 7 repeat occupies aspartate 477–threonine 507.

This sequence belongs to the phosphatase 2A regulatory subunit B family. PP2A exists in several trimeric forms, all of which consist of a core composed of a catalytic subunit associated with a 65 kDa (PR65) (Subunit A) and a 55 kDa (PR55) (Subunit B) regulatory subunit.

Phosphatase 2A affects a variety of biological processes in the cell such as transcription, cell cycle progression and cellular morphogenesis, and provides an initial identification of critical substrates for this phosphatase. The regulatory subunit may direct the catalytic subunit to distinct, albeit overlapping, subsets of substrates. This is Protein phosphatase PP2A regulatory subunit B (CDC55) from Candida tropicalis (Yeast).